The chain runs to 336 residues: Alcohol dehydrogenase (336 aa).

Zn(2+) is bound by residues Cys-37, His-58, Cys-89, Cys-92, Cys-95, Cys-103, and Cys-145.

Belongs to the zinc-containing alcohol dehydrogenase family. The cofactor is Zn(2+).

The enzyme catalyses a primary alcohol + NAD(+) = an aldehyde + NADH + H(+). The catalysed reaction is a secondary alcohol + NAD(+) = a ketone + NADH + H(+). The chain is Alcohol dehydrogenase (adh) from Staphylococcus aureus (strain Mu50 / ATCC 700699).